A 498-amino-acid chain; its full sequence is ATP synthase subunit beta, chloroplastic (498 aa).

172–179 is a binding site for ATP; sequence GGAGVGKT.

This sequence belongs to the ATPase alpha/beta chains family. F-type ATPases have 2 components, CF(1) - the catalytic core - and CF(0) - the membrane proton channel. CF(1) has five subunits: alpha(3), beta(3), gamma(1), delta(1), epsilon(1). CF(0) has four main subunits: a(1), b(1), b'(1) and c(9-12).

Its subcellular location is the plastid. The protein localises to the chloroplast thylakoid membrane. It catalyses the reaction ATP + H2O + 4 H(+)(in) = ADP + phosphate + 5 H(+)(out). Produces ATP from ADP in the presence of a proton gradient across the membrane. The catalytic sites are hosted primarily by the beta subunits. The chain is ATP synthase subunit beta, chloroplastic from Canella winterana (Wild cinnamon).